The sequence spans 403 residues: MVIRAFLDKIEHNFEKGGRFEKWYALYEAVDTFLYRPASVTKTTAHVRDGIDLKRMMILVWLCTFPAMFFGMWNTGYQANLIFAGNPELLAAQGGWRFALTGALAGFDPNSLWDCFVQGAAYFLPIYAVTFIVGGFWEVLFASVRKHEINEGFFVTSVLFSLTLPPSIPLWQVAMGISFGVVIGKEVFGGTGKNFLNPALVGRAFLFFAYPAQLSGDGVWTAVDGYAGATALSLAAAGGVEGVVSAGVSWMDAFLGIEQGSIGETSTLAILIGGAVLLLTKIAAWRIVAGVMVGMVVLSSLFNLIGSDTNPMFAMPWYWHLVAGGFAFGTLFMATDPVSASMTNTGKWAFGILIGVMVVLIRVVNPAFPEGMMLAILFGNLCAPLIDHFVVQANIKRRLARNV.

The next 4 helical transmembrane spans lie at M56 to G76, A121 to F141, L164 to G184, and F195 to A212. T230 bears the FMN phosphoryl threonine mark. The next 6 membrane-spanning stretches (helical) occupy residues A237–I257, T265–W285, I287–S307, M312–F332, W348–F368, and G371–V391.

This sequence belongs to the NqrB/RnfD family. In terms of assembly, composed of six subunits; NqrA, NqrB, NqrC, NqrD, NqrE and NqrF. Requires FMN as cofactor.

The protein localises to the cell inner membrane. The catalysed reaction is a ubiquinone + n Na(+)(in) + NADH + H(+) = a ubiquinol + n Na(+)(out) + NAD(+). NQR complex catalyzes the reduction of ubiquinone-1 to ubiquinol by two successive reactions, coupled with the transport of Na(+) ions from the cytoplasm to the periplasm. NqrA to NqrE are probably involved in the second step, the conversion of ubisemiquinone to ubiquinol. In Azotobacter vinelandii (strain DJ / ATCC BAA-1303), this protein is Na(+)-translocating NADH-quinone reductase subunit B.